The chain runs to 264 residues: Thymidylate synthase (264 aa).

DUMP is bound at residue Arg21. His51 is a binding site for (6R)-5,10-methylene-5,6,7,8-tetrahydrofolate. 126–127 lines the dUMP pocket; it reads RR. The Nucleophile role is filled by Cys146. DUMP is bound by residues 166–169, Asn177, and 207–209; these read RSGD and HLY. Asp169 is a binding site for (6R)-5,10-methylene-5,6,7,8-tetrahydrofolate. Residue Ala263 coordinates (6R)-5,10-methylene-5,6,7,8-tetrahydrofolate.

This sequence belongs to the thymidylate synthase family. Bacterial-type ThyA subfamily. As to quaternary structure, homodimer.

It is found in the cytoplasm. It catalyses the reaction dUMP + (6R)-5,10-methylene-5,6,7,8-tetrahydrofolate = 7,8-dihydrofolate + dTMP. The protein operates within pyrimidine metabolism; dTTP biosynthesis. In terms of biological role, catalyzes the reductive methylation of 2'-deoxyuridine-5'-monophosphate (dUMP) to 2'-deoxythymidine-5'-monophosphate (dTMP) while utilizing 5,10-methylenetetrahydrofolate (mTHF) as the methyl donor and reductant in the reaction, yielding dihydrofolate (DHF) as a by-product. This enzymatic reaction provides an intracellular de novo source of dTMP, an essential precursor for DNA biosynthesis. This Brevibacillus brevis (strain 47 / JCM 6285 / NBRC 100599) protein is Thymidylate synthase.